A 644-amino-acid polypeptide reads, in one-letter code: SURP and G-patch domain-containing protein 1 (644 aa).

Over residues 44-54 the composition is skewed to basic and acidic residues; that stretch reads REIEARMEQKA. 2 disordered regions span residues 44-74 and 98-122; these read REIE…ADAQ and AQAS…KRPL. Phosphothreonine is present on Thr128. The stretch at 188-230 is one SURP motif 1 repeat; sequence VIEKLARFVAEGGPELEKVAMEDYKDNPAFTFLHDKNSREFLY. Ser253 bears the Phosphoserine mark. An SURP motif 2 repeat occupies 263-306; sequence LAEKLARFIADGGPEVETIALQNNRENQAFSFLYDPNSQGYRYY. Disordered stretches follow at residues 316–342 and 360–412; these read AKAG…PEAL and PAVN…PSPL. At Ser323 the chain carries Phosphoserine. The span at 360-369 shows a compositional bias: pro residues; it reads PAVNPTPSIP. The Nuclear localization signal signature appears at 379-385; sequence KRKRKSR. A phosphoserine mark is found at Ser408, Ser410, Ser413, and Ser484. One can recognise a G-patch domain in the interval 561–608; sequence VENIGYQMLMKMGWKEGEGLGTEGQGIKNPVNKGATTIDGAGFGIDRP.

Component of the spliceosome.

The protein localises to the nucleus. Its function is as follows. Plays a role in pre-mRNA splicing. The chain is SURP and G-patch domain-containing protein 1 (Sugp1) from Rattus norvegicus (Rat).